The chain runs to 223 residues: Putative NAD(P)H nitroreductase SAB2397c (223 aa).

Belongs to the nitroreductase family. The cofactor is FMN.

This chain is Putative NAD(P)H nitroreductase SAB2397c, found in Staphylococcus aureus (strain bovine RF122 / ET3-1).